Reading from the N-terminus, the 469-residue chain is Programmed cell death protein 4 (469 aa).

At methionine 1 the chain carries N-acetylmethionine. 2 disordered regions span residues 1 to 38 and 58 to 128; these read MDVENEQILNVNPADPDNLSDSLFSGDEENAGTEEIKN and KAKR…GTPG. Phosphoserine is present on serine 25. Positions 58–64 match the Nuclear localization signal motif; the sequence is KAKRRLR. At serine 67 the chain carries Phosphoserine; by PKB and RPS6KB1. Residues serine 68, serine 71, serine 76, serine 78, serine 80, and serine 94 each carry the phosphoserine modification. A Phosphodegron motif is present at residues 70–76; sequence DSGRGDS. Positions 74–83 are enriched in low complexity; the sequence is GDSVSDSGSD. Positions 114-125 are enriched in gly residues; sequence KKGGAGGKGVWG. Position 152 is a phosphotyrosine (tyrosine 152). Residues 163-284 form the MI 1 domain; that stretch reads AFEKTLTPII…CNTYIDSYKG (122 aa). Positions 241 to 250 match the Nuclear localization signal motif; sequence DKLLKDLPEL. Serine 313 and serine 317 each carry phosphoserine. The MI 2 domain occupies 326–449; sequence HLVKEIDMLL…SKQLRDLCPS (124 aa). Serine 457 bears the Phosphoserine; by PKB mark.

It belongs to the PDCD4 family. In terms of assembly, interacts (via MI domains) with EIF4A2. Interacts (via MI domains) with EIF4A1 (via N-terminal domain). Heterotrimer with EIF4A1; one molecule of PDCD4 binds two molecules of EIF4A1. Interacts with EIF4G1. May form a complex with EIF4A1 and EIF4G1. The interaction between PDCD4 and EIF4A1 interferes with the interaction between EIF4A1 and EIF4G. When phosphorylated, interacts with BTRC and FBXW11. Post-translationally, polyubiquitinated, leading to its proteasomal degradation. Rapidly degraded in response to mitogens. Phosphorylation of the phosphodegron promotes interaction with BTRC and proteasomal degradation. In terms of processing, phosphorylated at Ser-67 by RPS6KB1 in response to mitogens; phosphorylation promotes proteasomal degradation of PDCD4. Up-regulated in proliferative cells. Highly expressed in epithelial cells of the mammary gland. Reduced expression in lung cancer and colon carcinoma.

It is found in the nucleus. It localises to the cytoplasm. Inhibits translation initiation and cap-dependent translation. May excert its function by hindering the interaction between EIF4A1 and EIF4G. Inhibits the helicase activity of EIF4A. Modulates the activation of JUN kinase. Down-regulates the expression of MAP4K1, thus inhibiting events important in driving invasion, namely, MAPK85 activation and consequent JUN-dependent transcription. May play a role in apoptosis. Tumor suppressor. Inhibits tumor promoter-induced neoplastic transformation. Binds RNA. This chain is Programmed cell death protein 4 (PDCD4), found in Homo sapiens (Human).